We begin with the raw amino-acid sequence, 423 residues long: Glutamyl-tRNA reductase 2 (423 aa).

Residues 48–51 (TCYR), S103, 108–110 (EPQ), and Q114 each bind substrate. The active-site Nucleophile is C49. 183 to 188 (GAGEMA) lines the NADP(+) pocket.

This sequence belongs to the glutamyl-tRNA reductase family. Homodimer.

The enzyme catalyses (S)-4-amino-5-oxopentanoate + tRNA(Glu) + NADP(+) = L-glutamyl-tRNA(Glu) + NADPH + H(+). It functions in the pathway porphyrin-containing compound metabolism; protoporphyrin-IX biosynthesis; 5-aminolevulinate from L-glutamyl-tRNA(Glu): step 1/2. Its function is as follows. Catalyzes the NADPH-dependent reduction of glutamyl-tRNA(Glu) to glutamate 1-semialdehyde (GSA). This Anaeromyxobacter sp. (strain Fw109-5) protein is Glutamyl-tRNA reductase 2.